Consider the following 328-residue polypeptide: L-lactate dehydrogenase (328 aa).

Residues Val-18, Glu-39, Lys-46, Tyr-71, and 85–86 each bind NAD(+); that span reads GA. Substrate contacts are provided by Gln-88 and Arg-94. NAD(+) contacts are provided by residues Ser-107, 124–126, and Ser-149; that span reads AAN. Residue 126-129 coordinates substrate; the sequence is NPVD. Substrate is bound at residue 154–157; that stretch reads DTAR. The beta-D-fructose 1,6-bisphosphate site is built by Arg-159 and His-174. His-181 (proton acceptor) is an active-site residue. At Tyr-226 the chain carries Phosphotyrosine. Thr-235 serves as a coordination point for substrate.

It belongs to the LDH/MDH superfamily. LDH family. Homotetramer.

It localises to the cytoplasm. It carries out the reaction (S)-lactate + NAD(+) = pyruvate + NADH + H(+). Its pathway is fermentation; pyruvate fermentation to lactate; (S)-lactate from pyruvate: step 1/1. Its activity is regulated as follows. Allosterically activated by fructose 1,6-bisphosphate (FBP). In terms of biological role, catalyzes the conversion of lactate to pyruvate. This is L-lactate dehydrogenase from Streptococcus mutans serotype c (strain ATCC 700610 / UA159).